A 426-amino-acid chain; its full sequence is CAAX prenyl protease 1 homolog (426 aa).

The Lumenal segment spans residues 1 to 3 (MVN). A helical transmembrane segment spans residues 4–24 (YFIISISFFLLEHFYSFYLNF). Over 25–70 (RQSKLLKNLTKVPEYCKDRITQEDFKKSQEYSKAKLDYKTLTSTIQ) the chain is Cytoplasmic. Residues 71-91 (VLTTLLSFYYPVYPYFWNLSL) form a helical membrane-spanning segment. The Lumenal segment spans residues 92–106 (ELAEKIGYPNEIIRS). Residues 107–127 (CFFFAFTVGVSVITEIPFSYY) form a helical membrane-spanning segment. At 128 to 150 (YQFILEEKFGYNRMTRTLFIKDK) the chain is on the cytoplasmic side. Residues 151 to 171 (IISTLLMIGFGLPILSLAIFI) form a helical membrane-spanning segment. The Lumenal segment spans residues 172–178 (INWSGPQ). A helical transmembrane segment spans residues 179–199 (LWFYCWLLLVAITLLSITIYP). The Cytoplasmic segment spans residues 200 to 294 (TFIQPLFNKF…GHYKMSHTLK (95 aa)). His-282 contributes to the Zn(2+) binding site. The active site involves Glu-283. His-286 contacts Zn(2+). Residues 295-315 (QMLLVQVHLVTLLYAFSLLIN) form a helical membrane-spanning segment. Over 316 to 333 (DDQLYQQFGFVSSKDSVL) the chain is Lumenal. Residues 334 to 354 (VGLTLFMFLYSPIDRIFSLLI) form a helical membrane-spanning segment. Residues 355–426 (NIFSRKYEFQ…KVALYKLKNK (72 aa)) lie on the Cytoplasmic side of the membrane. Glu-362 lines the Zn(2+) pocket.

The protein belongs to the peptidase M48B family. Zn(2+) serves as cofactor.

The protein resides in the endoplasmic reticulum membrane. It carries out the reaction Hydrolyzes the peptide bond -P2-(S-farnesyl or geranylgeranyl)C-P1'-P2'-P3'-COOH where P1' and P2' are amino acids with aliphatic side chains and P3' is any C-terminal residue.. Functionally, proteolytically removes the C-terminal three residues of farnesylated proteins. This Dictyostelium discoideum (Social amoeba) protein is CAAX prenyl protease 1 homolog (zmpste24).